Consider the following 558-residue polypeptide: Armadillo repeat-containing X-linked protein 5 (558 aa).

Basic and acidic residues-rich tracts occupy residues 1 to 14 (MVDS…RGKA) and 139 to 156 (KSHD…REEA). 2 disordered regions span residues 1–34 (MVDS…NGKT) and 139–163 (KSHD…MKSS). ARM repeat units lie at residues 300 to 339 (CKSR…GISP), 422 to 461 (VKFE…CLSK), 463 to 503 (HANT…NINF), and 520 to 558 (SELI…ILKL).

The protein belongs to the eutherian X-chromosome-specific Armcx family.

This Pongo abelii (Sumatran orangutan) protein is Armadillo repeat-containing X-linked protein 5 (ARMCX5).